Consider the following 236-residue polypeptide: 3-deoxy-D-manno-octulosonic acid kinase (236 aa).

Residue Asp-167 is part of the active site.

This sequence belongs to the protein kinase superfamily. KdkA/RfaP family.

It is found in the cell inner membrane. The catalysed reaction is an alpha-Kdo-(2-&gt;6)-lipid IVA + ATP = a 4-O-phospho-alpha-Kdo-(2-&gt;6)-lipid IVA + ADP + H(+). It participates in bacterial outer membrane biogenesis; LPS core biosynthesis. Catalyzes the ATP-dependent phosphorylation of the 3-deoxy-D-manno-octulosonic acid (Kdo) residue in Kdo-lipid IV(A) at the 4-OH position. The sequence is that of 3-deoxy-D-manno-octulosonic acid kinase from Vibrio vulnificus (strain YJ016).